Consider the following 383-residue polypeptide: BRISC and BRCA1-A complex member 2 (383 aa).

At Met-1 the chain carries N-acetylmethionine. Phosphoserine is present on Ser-2. UEV-like regions lie at residues Asp-30–Glu-147 and Ile-275–Ala-364.

The protein belongs to the BABAM2 family. As to quaternary structure, component of the ARISC complex, at least composed of UIMC1/RAP80, ABRAXAS1, BRCC3/BRCC36, BABAM2 and BABAM1/NBA1. Component of the BRCA1-A complex, at least composed of BRCA1, BARD1, UIMC1/RAP80, ABRAXAS1, BRCC3/BRCC36, BABAM2 and BABAM1/NBA1. In the BRCA1-A complex, interacts directly with ABRAXAS1, BRCC3/BRCC36 and BABAM1/NBA1. Binds polyubiquitin. Component of the BRISC complex, at least composed of ABRAXAS2, BRCC3/BRCC36, BABAM2 and BABAM1/NBA1. Identified in a complex with SHMT2 and the other subunits of the BRISC complex. Component of the BRCA1/BRCA2 containing complex (BRCC), which also contains BRCA1, BRCA2, BARD1, BRCC3/BRCC36 and RAD51. BRCC is a ubiquitin E3 ligase complex that enhances cellular survival following DNA damage. May interact with FAS and TNFRSF1A.

The protein localises to the cytoplasm. It is found in the nucleus. Its function is as follows. Component of the BRCA1-A complex, a complex that specifically recognizes 'Lys-63'-linked ubiquitinated histones H2A and H2AX at DNA lesions sites, leading to target the BRCA1-BARD1 heterodimer to sites of DNA damage at double-strand breaks (DSBs). The BRCA1-A complex also possesses deubiquitinase activity that specifically removes 'Lys-63'-linked ubiquitin on histones H2A and H2AX. In the BRCA1-A complex, it acts as an adapter that bridges the interaction between BABAM1/NBA1 and the rest of the complex, thereby being required for the complex integrity and modulating the E3 ubiquitin ligase activity of the BRCA1-BARD1 heterodimer. Component of the BRISC complex, a multiprotein complex that specifically cleaves 'Lys-63'-linked ubiquitin in various substrates. Within the BRISC complex, acts as an adapter that bridges the interaction between BABAM1/NBA1 and the rest of the complex, thereby being required for the complex integrity. The BRISC complex is required for normal mitotic spindle assembly and microtubule attachment to kinetochores via its role in deubiquitinating NUMA1. The BRISC complex plays a role in interferon signaling via its role in the deubiquitination of the interferon receptor IFNAR1; deubiquitination increases IFNAR1 activity by enhancing its stability and cell surface expression. Down-regulates the response to bacterial lipopolysaccharide (LPS) via its role in IFNAR1 deubiquitination. May play a role in homeostasis or cellular differentiation in cells of neural, epithelial and germline origins. May also act as a death receptor-associated anti-apoptotic protein, which inhibits the mitochondrial apoptotic pathway. May regulate TNF-alpha signaling through its interactions with TNFRSF1A; however these effects may be indirect. In Rattus norvegicus (Rat), this protein is BRISC and BRCA1-A complex member 2.